Here is an 860-residue protein sequence, read N- to C-terminus: MATNGHFASIGNSASDTTAYEHGVQVIDENKEFKNPNLSQYLSLENVTPSGFNYHLISVFGSQSTGKSTLLNHLFGTHFSVMSELERRQTTKGIWMSKNKNESSSMASNILVMDVEGTDGRERGEDQDFERKSALFALATSEVLIVNIWEHQVGLYQGANMGLLKTVFEVNLQLFLKDKNTTHRSLLFFVIRDYSGMTPLQNLQKTLMEDMARLWDSISKPGGLENSNVHDYFDFQFYGLPHKGYQPEKFVEETQKLSLRFCDGQRDPNLDARKGEFSDGGVFLPEYHRRIPADGFSRYAEGIWDQIVNNKDLDLPTQQELLAQFRCDEILREVMVAFDETIVPFEDKQSQAARLGEPEILGGLGAAMRSSRTKAVKAFESEASRYHKGVYQRKRAELESKADTRLKTLFQGQLNAAHKSGISEFSEAVTAAVKSGQKKGTGYDFAEIVNEEAKKAVDKFEEVARATVVDGTSWSDYKQELALYEKELAEVSARLRRDEMRRLASRVERWVQSRLGESVGLEFNALGSGRAGGGAPEKGDQPTEKKFWDRVWNVFVETVLDAERRFTDRASSFDASLEEVDVGLWRLRRKSWGVLRAKIDEEMIEGNLLLKLRENFEDKFRYDDAGVPRIWRPTDDIEGIYTRARESTLTLIPLLSKFRLDETSAPPPLDRWIGHTPSSATSADEEDLAPIGGVDEEEGKSLEEEMTIVSDAKRQELTVRFKKAADGVYVEAKRSAIGGMTQVPLYFYGLLLALGWNEIIAVLRNPAYFFLLFVCAVGAYITYQLNLWGPIIKMTEAASNQAVTEGKKRLREFLESSDTGRQAIAMSTPGGSGRGGEEHEMSRLNQQGKSAAADEDVDDL.

The Cytoplasmic portion of the chain corresponds to 1-742 (MATNGHFASI…KRSAIGGMTQ (742 aa)). The GB1/RHD3-type G domain occupies 51–300 (GFNYHLISVF…IPADGFSRYA (250 aa)). GTP is bound at residue 61 to 68 (GSQSTGKS). The stretch at 443-501 (YDFAEIVNEEAKKAVDKFEEVARATVVDGTSWSDYKQELALYEKELAEVSARLRRDEMR) forms a coiled coil. Residues 743-763 (VPLYFYGLLLALGWNEIIAVL) form a helical membrane-spanning segment. Residues 764–766 (RNP) are Lumenal-facing. A helical transmembrane segment spans residues 767-787 (AYFFLLFVCAVGAYITYQLNL). The Cytoplasmic portion of the chain corresponds to 788–860 (WGPIIKMTEA…AAADEDVDDL (73 aa)). Positions 818–860 (DTGRQAIAMSTPGGSGRGGEEHEMSRLNQQGKSAAADEDVDDL) are disordered.

It belongs to the TRAFAC class dynamin-like GTPase superfamily. GB1/RHD3 GTPase family. RHD3 subfamily.

It localises to the endoplasmic reticulum membrane. Its function is as follows. Cooperates with the reticulon proteins and tubule-shaping DP1 family proteins to generate and maintain the structure of the tubular endoplasmic reticulum network. Has GTPase activity, which is required for its function in ER organization. The polypeptide is Protein sey1 (sey1) (Aspergillus oryzae (strain ATCC 42149 / RIB 40) (Yellow koji mold)).